A 369-amino-acid chain; its full sequence is MIALLILSLTCSASTYRLQGFTNAGIVAYKNIQDDNIVFSPFGYSFSMFMSLLPASGNTRIELLKTMDLRKRDLGPAFTELISGLAKLKTSKYTYTDLTYQSFVDNTVCIKPSYYQQYHRFGLYRLNFRRDAVNKINSIVERRSGMSNVVDSNMLDNNTLWAIINTIYFKGIWQYPFDITKTRNASFTNKYGTKTVPMMNVVTKLQGNTITIDDKEYDMVRLPYKDANISMYLAIGDNMTHFTDSITAAKLDYWSFQLGNKVYNLKLPKFSIENKRDIKSIAEMMAPSMFNPDNASFKHMTRDPLYIYKMFQNAKIDVDEQGTVAEASTIMVATARSSPEKLEFNTPFVFIIRHDITGFILFMGKVESP.

An N-terminal signal peptide occupies residues 1 to 15 (MIALLILSLTCSAST).

Belongs to the serpin family. Orthopoxvirus OPG040 subfamily. In terms of assembly, interacts with A56 protein.

The protein resides in the virion membrane. Its subcellular location is the host cell membrane. Prevents cell to cell fusion via its interaction with A56 protein. The A56-K2 complex associates with components of the entry fusion complex (EFC) presumably to avoid superinfection and syncytium formation. In Vaccinia virus (strain Ankara) (VACV), this protein is Superinfection exclusion protein (OPG040).